The sequence spans 358 residues: UDP-N-acetylglucosamine--N-acetylmuramyl-(pentapeptide) pyrophosphoryl-undecaprenol N-acetylglucosamine transferase (358 aa).

Residues 10–12, Asn-124, Ser-196, and Gln-293 contribute to the UDP-N-acetyl-alpha-D-glucosamine site; that span reads TGG.

The protein belongs to the glycosyltransferase 28 family. MurG subfamily.

The protein resides in the cell membrane. It carries out the reaction di-trans,octa-cis-undecaprenyl diphospho-N-acetyl-alpha-D-muramoyl-L-alanyl-D-glutamyl-meso-2,6-diaminopimeloyl-D-alanyl-D-alanine + UDP-N-acetyl-alpha-D-glucosamine = di-trans,octa-cis-undecaprenyl diphospho-[N-acetyl-alpha-D-glucosaminyl-(1-&gt;4)]-N-acetyl-alpha-D-muramoyl-L-alanyl-D-glutamyl-meso-2,6-diaminopimeloyl-D-alanyl-D-alanine + UDP + H(+). The protein operates within cell wall biogenesis; peptidoglycan biosynthesis. Functionally, cell wall formation. Catalyzes the transfer of a GlcNAc subunit on undecaprenyl-pyrophosphoryl-MurNAc-pentapeptide (lipid intermediate I) to form undecaprenyl-pyrophosphoryl-MurNAc-(pentapeptide)GlcNAc (lipid intermediate II). The protein is UDP-N-acetylglucosamine--N-acetylmuramyl-(pentapeptide) pyrophosphoryl-undecaprenol N-acetylglucosamine transferase of Exiguobacterium sp. (strain ATCC BAA-1283 / AT1b).